The primary structure comprises 249 residues: Type III pantothenate kinase (249 aa).

6 to 13 (DCGNSFIK) is an ATP binding site. Residues Tyr93 and 100-103 (GLDR) each bind substrate. Asp102 functions as the Proton acceptor in the catalytic mechanism. A K(+)-binding site is contributed by Asp122. Thr125 is an ATP binding site. Substrate is bound at residue Thr181.

Belongs to the type III pantothenate kinase family. Homodimer. NH4(+) serves as cofactor. K(+) is required as a cofactor.

The protein resides in the cytoplasm. The catalysed reaction is (R)-pantothenate + ATP = (R)-4'-phosphopantothenate + ADP + H(+). The protein operates within cofactor biosynthesis; coenzyme A biosynthesis; CoA from (R)-pantothenate: step 1/5. In terms of biological role, catalyzes the phosphorylation of pantothenate (Pan), the first step in CoA biosynthesis. The chain is Type III pantothenate kinase from Pseudomonas fluorescens (strain Pf0-1).